The primary structure comprises 367 residues: Alpha-2-HS-glycoprotein (367 aa).

Residues 1–18 (MKSLVLLLCLAQLWGCHS) form the signal peptide. The region spanning 27–133 (YRQPNCDDPE…KFSVVYAKCD (107 aa)) is the Cystatin fetuin-A-type 1 domain. 6 disulfides stabilise this stretch: Cys-32–Cys-358, Cys-89–Cys-100, Cys-114–Cys-132, Cys-146–Cys-149, Cys-208–Cys-219, and Cys-230–Cys-247. 3 positions are modified to phosphoserine: Ser-134, Ser-135, and Ser-138. Residues 144–255 (KVCQDCPLLA…TCTVFQTQPV (112 aa)) form the Cystatin fetuin-A-type 2 domain. N-linked (GlcNAc...) asparagine glycosylation is found at Asn-156 and Asn-176. Residues 254–301 (PVTSQPQPEGANETVPTPVVDPDAPPSPPLGAPGLPPAGSPPDSHVLL) are disordered. Asn-265 carries N-linked (GlcNAc...) asparagine glycosylation. Residues 276–293 (DAPPSPPLGAPGLPPAGS) are compositionally biased toward pro residues. A propeptide spans 301–340 (LAAPPGHQLHWAHYDLRHTFMGVVSLGSPSGEASHPRKTR) (connecting peptide). Thr-319 is modified (phosphothreonine). Phosphoserine is present on residues Ser-325, Ser-328, and Ser-330. Residue Thr-339 is glycosylated (O-linked (GalNAc...) threonine).

Belongs to the fetuin family. In terms of assembly, alpha-2-HS glycoprotein derives from this precursor, when the connecting peptide is cleaved off. The two chains A and B are held together by a single disulfide bond. Post-translationally, phosphorylated by FAM20C in the extracellular medium.

Its subcellular location is the secreted. Functionally, promotes endocytosis, possesses opsonic properties and influences the mineral phase of bone. Shows affinity for calcium and barium ions. The protein is Alpha-2-HS-glycoprotein (AHSG) of Pan troglodytes (Chimpanzee).